Here is a 176-residue protein sequence, read N- to C-terminus: Ribosome maturation factor RimM (176 aa).

Positions 93-172 (KDEFFQFDII…EILVKGARDI (80 aa)) constitute a PRC barrel domain.

This sequence belongs to the RimM family. In terms of assembly, binds ribosomal protein uS19.

The protein resides in the cytoplasm. In terms of biological role, an accessory protein needed during the final step in the assembly of 30S ribosomal subunit, possibly for assembly of the head region. Essential for efficient processing of 16S rRNA. May be needed both before and after RbfA during the maturation of 16S rRNA. It has affinity for free ribosomal 30S subunits but not for 70S ribosomes. The protein is Ribosome maturation factor RimM of Campylobacter concisus (strain 13826).